Reading from the N-terminus, the 635-residue chain is BTB/POZ domain-containing protein SETH6 (635 aa).

Residues 39–104 enclose the BTB domain; sequence SDLTIEVGSA…CYGVGVQYNS (66 aa). The NPH3 domain maps to 206 to 494; sequence DWWGRSLPIL…VQVLFYEQTR (289 aa). Phosphotyrosine is present on Tyr-435. The segment at 604-635 is disordered; the sequence is QSVASSGKKHTEEKTNSERRFMFQKRRCHSVS. Over residues 612-624 the composition is skewed to basic and acidic residues; that stretch reads KHTEEKTNSERRF. A compositionally biased stretch (basic residues) spans 625-635; the sequence is MFQKRRCHSVS.

It belongs to the NPH3 family.

Its pathway is protein modification; protein ubiquitination. May act as a substrate-specific adapter of an E3 ubiquitin-protein ligase complex (CUL3-RBX1-BTB) which mediates the ubiquitination and subsequent proteasomal degradation of target proteins. In Arabidopsis thaliana (Mouse-ear cress), this protein is BTB/POZ domain-containing protein SETH6 (SETH6).